The following is a 189-amino-acid chain: Thymidine kinase (189 aa).

ATP is bound by residues Gly9–Thr16 and Asp85–Gln88. Glu86 functions as the Proton acceptor in the catalytic mechanism. Residues Cys143, Cys146, Cys180, and His183 each contribute to the Zn(2+) site.

The protein belongs to the thymidine kinase family. Homotetramer.

It localises to the cytoplasm. The enzyme catalyses thymidine + ATP = dTMP + ADP + H(+). This is Thymidine kinase from Streptococcus pyogenes serotype M3 (strain ATCC BAA-595 / MGAS315).